The primary structure comprises 168 residues: MRCLRIRERRDLFAFPYPIAVWREPPRSLEVVSDLALSYGVEHIYTVGDVVTKNFLDYGVTPTSAAVDEKTRRGLPVEQHRKFQRVIKVVNPPGYITEEAWAAVEEAVGGGVLIKVEGEEDMLALAFIKMAPPRSLVVYGHYKGALIAVMVDWYRDAIDRLLQYLEKC.

Residues Asp49, Val50, Val51, Asp68, Lys70, and Glu120 each contribute to the GTP site.

The protein belongs to the GTP-dependent DPCK family.

It catalyses the reaction 3'-dephospho-CoA + GTP = GDP + CoA + H(+). It participates in cofactor biosynthesis; coenzyme A biosynthesis. Functionally, catalyzes the GTP-dependent phosphorylation of the 3'-hydroxyl group of dephosphocoenzyme A to form coenzyme A (CoA). In Pyrobaculum neutrophilum (strain DSM 2338 / JCM 9278 / NBRC 100436 / V24Sta) (Thermoproteus neutrophilus), this protein is GTP-dependent dephospho-CoA kinase.